The sequence spans 425 residues: MAADKPHMNLAVIGHIDHGKSTTVGRMMFETGAVPAHIIEAYRKEAESKGKATFEFAWVMDNLKEERERGITIDIAHKRFDTPKYYFTVVDCPGHRDFVKNMITGASQADAAILVVAAPDGVMEQTKEHVFLARTLGITQIIIAINKMDAVKFDEKRFNEVKKELSDLIKMVGYKPEETLFIPISSLQGINIKANSPETPWYKGPALIPALDTFKEPSKPTDKPLRLPIQDSYSISGIGTVPVGRVETGIMKKGMKVSFMPANKDGEIKSIEMHHEEIPQAVPGDNVGFNVRGIAKGDIRRGDVCGPAEQPPTVADEFTAQVVVLQHPSAITVGYTPVFHCHTTQTACTFIELKKKLDPRSGQTKEENPTFLKTGDAAIVQIKPTKPMVIENVKELPQLGRFAVRDMGSTIAAGMCIAIQPKQMR.

Residues 5–221 (KPHMNLAVIG…DTFKEPSKPT (217 aa)) form the tr-type G domain. Positions 14 to 21 (GHIDHGKS) are G1. 14 to 21 (GHIDHGKS) contributes to the GTP binding site. Residue Ser-21 coordinates Mg(2+). A G2 region spans residues 70–74 (GITID). The segment at 91–94 (DCPG) is G3. GTP contacts are provided by residues 91–95 (DCPGH) and 146–149 (NKMD). Residues 146–149 (NKMD) are G4. Residues 185–187 (SSL) form a G5 region.

The protein belongs to the TRAFAC class translation factor GTPase superfamily. Classic translation factor GTPase family. EF-Tu/EF-1A subfamily.

It is found in the cytoplasm. It catalyses the reaction GTP + H2O = GDP + phosphate + H(+). GTP hydrolase that promotes the GTP-dependent binding of aminoacyl-tRNA to the A-site of ribosomes during protein biosynthesis. The chain is Elongation factor 1-alpha from Methanoregula boonei (strain DSM 21154 / JCM 14090 / 6A8).